A 614-amino-acid polypeptide reads, in one-letter code: Lamin-2 (614 aa).

Positions Met1–Gly10 are enriched in basic residues. The interval Met1–Thr51 is disordered. The head stretch occupies residues Met1–Leu76. Residues Ala21–Thr37 show a composition bias toward low complexity. The coil 1A stretch occupies residues Ser77 to Ser117. The region spanning Glu81–Leu433 is the IF rod domain. A linker 1 region spans residues Ser118 to Lys128. The coil 1B stretch occupies residues Glu129–Arg268. Positions Arg269–Lys286 are linker 2. Positions Ile287 to Leu426 are coil 2. The tract at residues Arg427–Cys611 is tail. Positions Leu433–Arg454 are disordered. The short motif at Arg449 to Ser458 is the Nuclear localization signal element. Positions Thr462–Ser581 constitute an LTD domain. Cys611 is lipidated: S-farnesyl cysteine. The propeptide at Val612 to Met614 is removed in mature form.

The protein belongs to the intermediate filament family.

It is found in the nucleus inner membrane. Its function is as follows. Intermediate filament (IF) protein, component of the nuclear lamina, a fibrous layer on the nucleoplasmic side of the inner nuclear membrane, which is thought to provide a framework for the nuclear envelope. The protein is Lamin-2 of Hypsibius exemplaris (Freshwater tardigrade).